The chain runs to 356 residues: 7,8-didemethyl-8-hydroxy-5-deazariboflavin synthase (356 aa).

In terms of domain architecture, Radical SAM core spans 40 to 280 (ITYSKNVFIP…KDISIQVPPN (241 aa)). [4Fe-4S] cluster contacts are provided by Cys54, Cys58, and Cys61.

This sequence belongs to the radical SAM superfamily. CofG family. Consists of two subunits, CofG and CofH. [4Fe-4S] cluster is required as a cofactor.

It catalyses the reaction 5-amino-5-(4-hydroxybenzyl)-6-(D-ribitylimino)-5,6-dihydrouracil + S-adenosyl-L-methionine = 7,8-didemethyl-8-hydroxy-5-deazariboflavin + 5'-deoxyadenosine + L-methionine + NH4(+) + H(+). The protein operates within cofactor biosynthesis; coenzyme F0 biosynthesis. Its function is as follows. Catalyzes the radical-mediated synthesis of 7,8-didemethyl-8-hydroxy-5-deazariboflavin from 5-amino-5-(4-hydroxybenzyl)-6-(D-ribitylimino)-5,6-dihydrouracil. In Methanococcus aeolicus (strain ATCC BAA-1280 / DSM 17508 / OCM 812 / Nankai-3), this protein is 7,8-didemethyl-8-hydroxy-5-deazariboflavin synthase.